The following is a 190-amino-acid chain: RNA pyrophosphohydrolase (190 aa).

In terms of domain architecture, Nudix hydrolase spans 6-149 (GYRPNVGIIL…KRDVYTQALN (144 aa)). The Nudix box signature appears at 38-59 (GGIKYGESPVQAMYRELHEEVG). Residues 167–190 (QRVHGPRSTDNPSSETDGHAHIAG) form a disordered region.

This sequence belongs to the Nudix hydrolase family. RppH subfamily. The cofactor is a divalent metal cation.

Its function is as follows. Accelerates the degradation of transcripts by removing pyrophosphate from the 5'-end of triphosphorylated RNA, leading to a more labile monophosphorylated state that can stimulate subsequent ribonuclease cleavage. This chain is RNA pyrophosphohydrolase, found in Bordetella parapertussis (strain 12822 / ATCC BAA-587 / NCTC 13253).